Here is a 976-residue protein sequence, read N- to C-terminus: MTESPTTTPGSTSGAPSGVPSGVNDAESDAPRHRYTAELAAGVERTWQQNWARLGTFNVPNPVGSLAPSDGSPVPEDKLFVQDMFPYPSGEGLHVGHPLGYIATDVFARYHRMKGRNVLHALGFDAFGLPAEQYAVQTGTHPRTRTEANVVNFRRQLGRLGLGHDSRRSFSTTDVEFYKWTQWIFLQIYNAWFDAAANKARPISELVAEFDSGARSLVDGRDWSTLSAGERADVIDDHRLVYRADSMVNWCPGLGTVLANEEVTSDGRSDRGNFPVFRKRLRQWMMRITAYSDRLLDDLDVLDWPDQVKTMQRNWIGRSTGASALFTATRSNGETVGLEVFTTRPDTLFGATYLVLAPEHDLVDDLVGAGWPAGVDPLWTGGGATPAEAVAAYRRAIAVKSDLERQESKEKTGVFLGSHAINPATGQPVPIFIADYVLAGYGTGAIMAVPGHDQRDWDFARALGLPVVEVIAGGDISQAAYTGDGVLVNSGFLDGMSVGEAKQAITARLESDGYGQARIEFKLRDWLFARQRYWGEPFPIVYDADGRPHALDESALPVELPDVPDYSPVLFDPDDANSEPSPPLGKATEWLHVELDLGDGLKPYSRDTNVMPQWAGSSWYELRYTDPHNADRFCAKENETYWMGPRPAEHGPDDPGGVDLYVGGAEHAVLHLLYARFWHKVLYDLGHVSSREPYRKLINQGYIQAFAYTDARGSYVPAEEVIERDGGFVYPGADGEIEVFQEFGKIGKSLKNSISPDEICDDYGADTLRVYEMSMGPIEASRPWATKDVIGAHRFLQRVWRLVIDENTGEILVADTPAELDTDTLRALHRAIAGVAEDYAALRNNTAVAKLIEYTNFLTKRHRDAVPRAVIEPLVLMVAPLAPHLAEELWQRLGHTTSLAHGPFPAADPAYLIDDTVEYPVQVNGKVRGRVVVAADADDDAVKAAALADQKVQAFLAGASPRKVIVVAGRLVNLVV.

A compositionally biased stretch (low complexity) spans 1-23 (MTESPTTTPGSTSGAPSGVPSGV). Residues 1 to 34 (MTESPTTTPGSTSGAPSGVPSGVNDAESDAPRHR) form a disordered region. Residues 86-97 (PYPSGEGLHVGH) carry the 'HIGH' region motif. Residues 745–749 (KIGKS) carry the 'KMSKS' region motif. Residue Lys-748 coordinates ATP.

This sequence belongs to the class-I aminoacyl-tRNA synthetase family.

It localises to the cytoplasm. The enzyme catalyses tRNA(Leu) + L-leucine + ATP = L-leucyl-tRNA(Leu) + AMP + diphosphate. The chain is Leucine--tRNA ligase from Mycobacterium ulcerans (strain Agy99).